The following is a 357-amino-acid chain: UPF0283 membrane protein BMEI0952 (357 aa).

A disordered region spans residues 1–36 (MSDKTPRKPTAFRLEQPARVSAASEQEEPRRPRAVK). Basic and acidic residues predominate over residues 27 to 36 (EEPRRPRAVK). Transmembrane regions (helical) follow at residues 78–98 (ILFG…TEDL) and 109–129 (LGWT…AIIL).

Belongs to the UPF0283 family.

Its subcellular location is the cell inner membrane. This chain is UPF0283 membrane protein BMEI0952, found in Brucella melitensis biotype 1 (strain ATCC 23456 / CCUG 17765 / NCTC 10094 / 16M).